Consider the following 229-residue polypeptide: Dihydrofolate reductase (229 aa).

In terms of domain architecture, DHFR spans 11–227; that stretch reads SITAVVAATA…VKYIFEMWVL (217 aa). Residues A17 and 23 to 29 each bind NADP(+); that span reads GIGLNGG. Position 37–42 (37–42) interacts with substrate; the sequence is EMKYFA. An NADP(+)-binding site is contributed by 64 to 66; it reads RKT. Residue R80 coordinates substrate. Residues 86 to 88 and 127 to 134 each bind NADP(+); these read SGK and GGATLYTS.

The protein belongs to the dihydrofolate reductase family. In terms of assembly, monomer.

It carries out the reaction (6S)-5,6,7,8-tetrahydrofolate + NADP(+) = 7,8-dihydrofolate + NADPH + H(+). Its pathway is cofactor biosynthesis; tetrahydrofolate biosynthesis; 5,6,7,8-tetrahydrofolate from 7,8-dihydrofolate: step 1/1. Key enzyme in folate metabolism. Catalyzes an essential reaction for de novo glycine and purine synthesis, and for DNA precursor synthesis. This chain is Dihydrofolate reductase (DFR1), found in Cryptococcus neoformans var. neoformans serotype D (strain JEC21 / ATCC MYA-565) (Filobasidiella neoformans).